The following is a 202-amino-acid chain: Eukaryotic translation initiation factor isoform 4E (202 aa).

The interval 1–24 (MATEAPPPVDTTEVPPFTAAETAV) is disordered. Residues 46 to 51 (QGAAWG), lysine 78, and 96 to 97 (WE) contribute to the mRNA site. Cysteine 101 and cysteine 140 are disulfide-bonded. MRNA contacts are provided by residues 147–152 (RRSQDK) and 191–194 (KRER).

Belongs to the eukaryotic initiation factor 4E family. As to quaternary structure, EIF4F is a multi-subunit complex, the composition of which varies with external and internal environmental conditions. It is composed of at least EIF4A, EIF4E and EIF4G. EIF4E is also known to interact with other partners. In higher plants two isoforms of EIF4F have been identified, named isoform EIF4F and isoform EIF(iso)4F. Isoform EIF4F has subunits p220 and p26, whereas isoform EIF(iso)4F has subunits p82 and p28. In terms of assembly, (Microbial infection) Interacts with viral genome-linked protein (VPg); this interaction is possible in susceptible hosts but impaired in resistant plants. According to the redox status, the Cys-101-Cys-140 disulfide bridge may have a role in regulating protein function by affecting its ability to bind capped mRNA.

The protein resides in the cytoplasm. The protein localises to the nucleus. Its function is as follows. Component of the protein complex eIF4F, which is involved in the recognition of the mRNA cap, ATP-dependent unwinding of 5'-terminal secondary structure and recruitment of mRNA to the ribosome. Recognizes and binds the 7-methylguanosine-containing mRNA cap during an early step in the initiation of protein synthesis and facilitates ribosome binding by inducing the unwinding of the mRNAs secondary structures. Key component of recessive resistance to potyviruses. (Microbial infection) Susceptibility host factor required for viral infection by recruiting viral RNAs to the host ribosomal complex via an interaction with viral genome-linked protein (VPg). The polypeptide is Eukaryotic translation initiation factor isoform 4E (Capsicum annuum (Capsicum pepper)).